The sequence spans 480 residues: Glycogen synthase 1 (480 aa).

An ADP-alpha-D-glucose-binding site is contributed by Lys15.

It belongs to the glycosyltransferase 1 family. Bacterial/plant glycogen synthase subfamily.

It catalyses the reaction [(1-&gt;4)-alpha-D-glucosyl](n) + ADP-alpha-D-glucose = [(1-&gt;4)-alpha-D-glucosyl](n+1) + ADP + H(+). The protein operates within glycan biosynthesis; glycogen biosynthesis. Functionally, synthesizes alpha-1,4-glucan chains using ADP-glucose. The sequence is that of Glycogen synthase 1 (glgA1) from Rhizobium meliloti (strain 1021) (Ensifer meliloti).